The sequence spans 863 residues: MGCVKLVFFMLYVFLFQLVSSSSLPHLCPEDQALALLQFKNMFTVNPNAFHYCPDITGREIQSYPRTLSWNKSTSCCSWDGVHCDETTGQVIALDLRCSQLQGKFHSNSSLFQLSNLKRLDLSNNNFIGSLISPKFGEFSDLTHLDLSDSSFTGVIPSEISHLSKLHVLLIGDQYGLSIVPHNFEPLLKNLTQLRELNLYEVNLSSTVPSNFSSHLTTLQLSGTGLRGLLPERVFHLSDLEFLDLSYNSQLMVRFPTTKWNSSASLMKLYVHSVNIADRIPESFSHLTSLHELDMGYTNLSGPIPKPLWNLTNIESLDLRYNHLEGPIPQLPIFEKLKKLSLFRNDNLDGGLEFLSFNTQLERLDLSSNSLTGPIPSNISGLQNLECLYLSSNHLNGSIPSWIFSLPSLVELDLSNNTFSGKIQEFKSKTLSAVTLKQNKLKGRIPNSLLNQKNLQLLLLSHNNISGHISSAICNLKTLILLDLGSNNLEGTIPQCVVERNEYLSHLDLSKNRLSGTINTTFSVGNILRVISLHGNKLTGKVPRSLINCKYLALLDLGNNQLNDTFPNWLGHLSQLKILSLRSNKLHGPIKSSGNTNLFTRLQIMDLSYNGFSGNLPESILGNLQAMKKIDESTRTPEYISDPYDFYYNYLTTITTKGQDYDSVRILDSNMIINLSKNRFEGRIPSIIGDLVGLRTLNLSHNVLEGHIPASFQNLSVLESLDLSSNKISGEIPQQLASLTFLEVLNLSHNHLVGCIPKGKQFDSFGNTSYQGNDGLCGFPLSKLCGGDDQVTTPAELDQEEEEEDSPMISWQGVLVGYGCGLVIGLSVIYIMWSTQYPAWFSRMHLKLEQIVTTRMKKHKKRY.

The first 21 residues, 1 to 21 (MGCVKLVFFMLYVFLFQLVSS), serve as a signal peptide directing secretion. At 22–812 (SSLPHLCPED…EEDSPMISWQ (791 aa)) the chain is on the extracellular side. The segment at 24-90 (LPHLCPEDQA…GVHCDETTGQ (67 aa)) is N-cap. Residues Asn-71 and Asn-108 are each glycosylated (N-linked (GlcNAc...) asparagine). Residues 91 to 114 (VIALDLRCSQLQGKFHSNSSLFQL) form an LRR 1; degenerate repeat. LRR repeat units follow at residues 115–138 (SNLKRLDLSNNNFIGSLISPKFGE) and 140–163 (SDLTHLDLSDSSFTGVIPSEISHL). Residues 164–190 (SKLHVLLIGDQYGLSIVPHNFEPLLKN) form an LRR 4; degenerate repeat. N-linked (GlcNAc...) asparagine glycans are attached at residues Asn-190, Asn-203, and Asn-211. LRR repeat units follow at residues 191–213 (LTQLRELNLYEVNLSSTVPSNFS), 214–237 (SHLTTLQLSGTGLRGLLPERVFHL), 240–262 (LEFLDLSYNSQLMVRFPTTKWNS), 264–286 (ASLMKLYVHSVNIADRIPESFSH), 287–311 (LTSLHELDMGYTNLSGPIPKPLWNL), and 312–336 (TNIESLDLRYNHLEGPIPQLPIFEK). Asn-261 carries N-linked (GlcNAc...) asparagine glycosylation. N-linked (GlcNAc...) asparagine glycosylation is found at Asn-299 and Asn-310. The stretch at 337 to 357 (LKKLSLFRNDNLDGGLEFLSF) is one LRR 11; degenerate repeat. 15 LRR repeats span residues 358–382 (NTQLERLDLSSNSLTGPIPSNISGL), 383–406 (QNLECLYLSSNHLNGSIPSWIFSL), 408–428 (SLVELDLSNNTFSGKIQEFKS), 429–452 (KTLSAVTLKQNKLKGRIPNSLLNQ), 454–476 (NLQLLLLSHNNISGHISSAICNL), 477–500 (KTLILLDLGSNNLEGTIPQCVVER), 502–524 (EYLSHLDLSKNRLSGTINTTFSV), 525–549 (GNILRVISLHGNKLTGKVPRSLINC), 551–572 (YLALLDLGNNQLNDTFPNWLGH), 573–597 (LSQLKILSLRSNKLHGPIKSSGNTN), 599–623 (FTRLQIMDLSYNGFSGNLPESILGN), 667–690 (LDSNMIINLSKNRFEGRIPSIIGD), 691–714 (LVGLRTLNLSHNVLEGHIPASFQN), 715–739 (LSVLESLDLSSNKISGEIPQQLASL), and 741–759 (FLEVLNLSHNHLVGCIPKG). Asn-378, Asn-396, and Asn-416 each carry an N-linked (GlcNAc...) asparagine glycan. Asn-464 carries an N-linked (GlcNAc...) asparagine glycan. The N-linked (GlcNAc...) asparagine glycan is linked to Asn-519. N-linked (GlcNAc...) asparagine glycosylation is present at Asn-563. N-linked (GlcNAc...) asparagine glycosylation is found at Asn-674, Asn-698, and Asn-714. 2 N-linked (GlcNAc...) asparagine glycosylation sites follow: Asn-746 and Asn-767. The interval 760 to 812 (KQFDSFGNTSYQGNDGLCGFPLSKLCGGDDQVTTPAELDQEEEEEDSPMISWQ) is C-cap/acidic domain. A helical membrane pass occupies residues 813 to 833 (GVLVGYGCGLVIGLSVIYIMW). The Cytoplasmic portion of the chain corresponds to 834-863 (STQYPAWFSRMHLKLEQIVTTRMKKHKKRY).

This sequence belongs to the RLP family.

It is found in the cell membrane. Functionally, involved in plant defense. Confers resistance to the fungal pathogen C.fulvum through recognition of the AVR9 elicitor protein. This is Receptor-like protein 9DC3 from Solanum pimpinellifolium (Currant tomato).